Here is a 404-residue protein sequence, read N- to C-terminus: Argininosuccinate synthase (404 aa).

Residues 10–18 (AYSGGVDTS) and A38 contribute to the ATP site. Y89 is a binding site for L-citrulline. Residue G119 coordinates ATP. 3 residues coordinate L-aspartate: T121, N125, and D126. Position 125 (N125) interacts with L-citrulline. Residues R129, S177, S186, E262, and Y274 each contribute to the L-citrulline site.

The protein belongs to the argininosuccinate synthase family. Type 1 subfamily. In terms of assembly, homotetramer.

It is found in the cytoplasm. The enzyme catalyses L-citrulline + L-aspartate + ATP = 2-(N(omega)-L-arginino)succinate + AMP + diphosphate + H(+). The protein operates within amino-acid biosynthesis; L-arginine biosynthesis; L-arginine from L-ornithine and carbamoyl phosphate: step 2/3. This chain is Argininosuccinate synthase, found in Prochlorococcus marinus (strain MIT 9515).